A 496-amino-acid polypeptide reads, in one-letter code: UDP-glycosyltransferase 84A2 (496 aa).

The Proton acceptor role is filled by H23. An an anthocyanidin-binding site is contributed by H23. The UDP-alpha-D-glucose site is built by Q352, H367, W370, N371, S372, and E375. G390 provides a ligand contact to an anthocyanidin. 2 residues coordinate UDP-alpha-D-glucose: D391 and Q392.

Belongs to the UDP-glycosyltransferase family. Expressed in roots, cotyledons, leaf veins and trichomes.

The catalysed reaction is (E)-sinapate + UDP-alpha-D-glucose = 1-O-(trans-sinapoyl)-beta-D-glucose + UDP. In terms of biological role, sinapate glucosyltransferase (SGT) required for the biosynthesis of the glucose ester sinapoylglucose and subsequently sinapoylmalate and sinapoylcholine. Is the major SGT activity in plant. Plays an important role in sinapoylation of anthocyanins. Sinapoylglucose produced by UGT84A2 is a significant source of sinapoyl moieties for anthocyanins. Indole-3-butyric acid (IBA)-specific glucosyltransferase that catalyzes the glucosylation of the auxin IBA, but not indole-3-acetic acid (IAA). May be involved in flowering regulation through IBA-mediated transcriptional repression of the auxin-response factors ARF6 and ARF8 and downstream flowering pathway genes. Can glucosylate the phytotoxic xenobiotic compound 2,4,5-trichlorophenol (TCP). This chain is UDP-glycosyltransferase 84A2, found in Arabidopsis thaliana (Mouse-ear cress).